The following is a 328-amino-acid chain: E3 ubiquitin-protein ligase RING1-like (328 aa).

An N-acetylserine modification is found at S2. The segment at C216–R257 adopts an RING-type; atypical zinc-finger fold. Positions D264–D328 are disordered. Gly residues predominate over residues S306–N319.

In terms of processing, auto-ubiquitinated as part of the enzymatic reaction. In terms of tissue distribution, expressed in leaves, roots, trichomes, stipules, and also in anthers and stigma of flowers.

The enzyme catalyses S-ubiquitinyl-[E2 ubiquitin-conjugating enzyme]-L-cysteine + [acceptor protein]-L-lysine = [E2 ubiquitin-conjugating enzyme]-L-cysteine + N(6)-ubiquitinyl-[acceptor protein]-L-lysine.. Its pathway is protein modification; protein ubiquitination. Functionally, E3 ubiquitin-protein ligase which accepts ubiquitin from an E2 ubiquitin-conjugating enzyme in the form of a thioester and then directly transfers the ubiquitin to targeted substrates. Promotes polyubiquitination of target proteins. The protein is E3 ubiquitin-protein ligase RING1-like of Arabidopsis thaliana (Mouse-ear cress).